A 178-amino-acid chain; its full sequence is Cell wall-binding protein YwsB (178 aa).

The signal sequence occupies residues 1–30 (MNKPTKLFSTLALAAGMTAAAAGGAGTIHA). SH3b domains lie at 47-111 (IDSY…VKAA) and 116-178 (TKTK…HMTK).

It localises to the secreted. The protein resides in the cell wall. With respect to regulation, increases in stationary phase in a strain lacking the WprA protease. The polypeptide is Cell wall-binding protein YwsB (ywsB) (Bacillus subtilis (strain 168)).